Here is a 715-residue protein sequence, read N- to C-terminus: Solute carrier organic anion transporter family member 1C1 (715 aa).

Topologically, residues 1 to 43 are cytoplasmic; that stretch reads MDTSSKENAHLFHKNSAQPAGGPSFTVGYPSTEEARPCCGKLK. Residues 44 to 63 form a helical membrane-spanning segment; sequence VFLGALSFVYFAKALAEGYL. The Extracellular segment spans residues 64 to 82; it reads KSTVTQIERRFEIPSSLVG. The helical transmembrane segment at 83–103 threads the bilayer; sequence IIDGSFEIGNLLVITFVSYFG. Residues 104–109 are Cytoplasmic-facing; sequence AKLHRP. Residues 110-134 form a helical membrane-spanning segment; the sequence is KIIGAGCLVMGFGTMLIAVPQFFME. Over 135–187 the chain is Extracellular; it reads KYSYEKYERYSPSSNVTPSISPCYLESSSPSPSSILGKSQNKISHECVGDSSS. Residues 188-216 traverse the membrane as a helical segment; it reads SMWVYVFLGNLLRGLGETPIQPLGIAYLD. The Cytoplasmic portion of the chain corresponds to 217–235; that stretch reads DFASEDNAAFYIGCVQTVA. The chain crosses the membrane as a helical span at residues 236-256; that stretch reads IIGPIFGFLLGSLCAKLYVDI. Residues 257 to 274 are Extracellular-facing; the sequence is GFVNLDHITITPKDPQWV. A helical transmembrane segment spans residues 275 to 299; that stretch reads GAWWLGYLIAGFLSLLAAVPFWCLP. The Cytoplasmic portion of the chain corresponds to 300 to 351; it reads KTLPRSQSRENSGSTSEKSKFIDDPIHYQMAPGDDKMKIMEMAKDFLPSLKT. The helical transmembrane segment at 352-373 threads the bilayer; it reads LFRNPVYILYLCASTVQFNSLF. Over 374-393 the chain is Extracellular; sequence GMVTYKPKYIEQQYGQSSSK. A helical transmembrane segment spans residues 394-417; sequence ANFVIGLINIPAVALGIFSGGIVM. The Cytoplasmic segment spans residues 418 to 421; the sequence is KKFR. Residues 422 to 445 form a helical membrane-spanning segment; the sequence is LGICEATKLYLGSSVFGYLLFLSL. The Extracellular portion of the chain corresponds to 446 to 557; that stretch reads FALGCENSSV…NGCSQMFLYF (112 aa). An N-linked (GlcNAc...) asparagine glycan is attached at N452. Residues 473–528 form the Kazal-like domain; the sequence is RALFSDCNSRCKCSDSKWEPMCGDNGITYVSACLAGCQSSSRSGKNIIFSNCTCVG. Disulfide bonds link C479–C509, C485–C505, and C494–C526. N523 and N536 each carry an N-linked (GlcNAc...) asparagine glycan. A helical transmembrane segment spans residues 558–580; it reads LVISVITSYTLSLGGIPGYILLL. Residues 581 to 589 lie on the Cytoplasmic side of the membrane; sequence RCIQPQLKS. Residues 590 to 615 form a helical membrane-spanning segment; it reads FALGIYTLAVRVLAGIPAPVYFGVLI. The Extracellular segment spans residues 616-649; sequence DTSCLKWGFKKCGSRGSCRLYDSHAFRHIYLGLT. A helical transmembrane segment spans residues 650 to 667; it reads TLLGTVSVFLSMAVLFVL. At 668–715 the chain is on the cytoplasmic side; that stretch reads KKKYVSKHSSLITTREKIGMSSSIKKETCAARDRGLQPKYWPGKETRL.

The protein belongs to the organo anion transporter (TC 2.A.60) family. Widely expressed throughout the brain except in the cerebellum. Not detected in kidney, heart, lung, skeletal muscle, spleen, liver, nor testis. Highly expressed in cerebral microvessels throughout the brain and in the choroid plexus (at mRNA and protein level).

The protein localises to the cell membrane. It catalyses the reaction 3,3',5'-triiodo-L-thyronine(out) = 3,3',5'-triiodo-L-thyronine(in). The catalysed reaction is L-thyroxine(out) = L-thyroxine(in). The enzyme catalyses L-thyroxine sulfate(out) = L-thyroxine sulfate(in). It carries out the reaction 17beta-estradiol 17-O-(beta-D-glucuronate)(out) = 17beta-estradiol 17-O-(beta-D-glucuronate)(in). It catalyses the reaction 3,3',5-triiodo-L-thyronine(out) = 3,3',5-triiodo-L-thyronine(in). Functionally, mediates the Na(+)-independent high affinity transport of thyroid hormones at the plasma membrane of brain capillary endothelial cells. The transport activity of substrates L-thyroxine (T4) and 3,3',5'-triiodo-L-thyronine (reverse T3, rT3) is much greater than that of 3,3',5-triiodo-L-thyronine (T3). The prehormone, T4, is the major form in the circulating blood and is converted to the active form, T3, by the iodothyronine-deiodinase in peripheral organs. T3 plays an essential role in brain development via binding to specific nuclear receptors (thyroid hormone receptor). Also transports organic anions such as the conjugated steroid 17-beta-glucuronosyl estradiol (17beta-estradiol 17-O-(beta-D-glucuronate)). Transports T4 and estrone-3-sulfate in a pH-insensitive manner. May serve as a drug efflux system at the blood brain barrier. The polypeptide is Solute carrier organic anion transporter family member 1C1 (Slco1c1) (Mus musculus (Mouse)).